A 435-amino-acid chain; its full sequence is Enolase (435 aa).

Glutamine 163 serves as a coordination point for (2R)-2-phosphoglycerate. Glutamate 205 (proton donor) is an active-site residue. The Mg(2+) site is built by aspartate 243, glutamate 292, and aspartate 319. Residues lysine 344, arginine 373, serine 374, and lysine 395 each coordinate (2R)-2-phosphoglycerate. The Proton acceptor role is filled by lysine 344.

The protein belongs to the enolase family. It depends on Mg(2+) as a cofactor.

The protein resides in the cytoplasm. It is found in the secreted. The protein localises to the cell surface. The enzyme catalyses (2R)-2-phosphoglycerate = phosphoenolpyruvate + H2O. It functions in the pathway carbohydrate degradation; glycolysis; pyruvate from D-glyceraldehyde 3-phosphate: step 4/5. Functionally, catalyzes the reversible conversion of 2-phosphoglycerate (2-PG) into phosphoenolpyruvate (PEP). It is essential for the degradation of carbohydrates via glycolysis. This is Enolase from Streptococcus equi subsp. zooepidemicus (strain MGCS10565).